A 335-amino-acid chain; its full sequence is Glutaredoxin-3 (335 aa).

At Ala2 the chain carries N-acetylalanine. The Thioredoxin domain occupies 2-117; it reads AAGAAEAAVA…LTKKVQRHAS (116 aa). Residues Ser117 and Ser120 each carry the phosphoserine modification. Glutaredoxin domains lie at 144-236 and 237-335; these read APCM…PKLE and ERLK…RGEN. [2Fe-2S] cluster is bound by residues Cys159 and Cys261.

As to quaternary structure, homodimer; the homodimer is independent of 2Fe-2S clusters. Heterotrimer; forms a heterotrimeric complex composed by two BOLA2 molecules and one GLRX3 molecule; linked by [2Fe-2S] clusters. Interacts (via N-terminus) with PRKCQ/PKC-theta. Interacts (via C-terminus) with CSRP3. Interacts with CSRP2. In terms of tissue distribution, expressed in heart, spleen, testis and, to a lower extent, in thymus and peripheral blood leukocytes. Weakly expressed in lung, placenta, colon and small intestine.

The protein localises to the cytoplasm. Its subcellular location is the cytosol. It localises to the cell cortex. It is found in the myofibril. The protein resides in the sarcomere. The protein localises to the z line. Functionally, together with BOLA2, acts as a cytosolic iron-sulfur (Fe-S) cluster assembly factor that facilitates [2Fe-2S] cluster insertion into a subset of cytosolic proteins. Acts as a critical negative regulator of cardiac hypertrophy and a positive inotropic regulator. Required for hemoglobin maturation. Does not possess any thyoredoxin activity since it lacks the conserved motif that is essential for catalytic activity. This Homo sapiens (Human) protein is Glutaredoxin-3 (GLRX3).